Here is a 214-residue protein sequence, read N- to C-terminus: 3-isopropylmalate dehydratase small subunit (214 aa).

It belongs to the LeuD family. LeuD type 1 subfamily. In terms of assembly, heterodimer of LeuC and LeuD.

It carries out the reaction (2R,3S)-3-isopropylmalate = (2S)-2-isopropylmalate. The protein operates within amino-acid biosynthesis; L-leucine biosynthesis; L-leucine from 3-methyl-2-oxobutanoate: step 2/4. Functionally, catalyzes the isomerization between 2-isopropylmalate and 3-isopropylmalate, via the formation of 2-isopropylmaleate. The chain is 3-isopropylmalate dehydratase small subunit from Pseudomonas fluorescens (strain ATCC BAA-477 / NRRL B-23932 / Pf-5).